Consider the following 447-residue polypeptide: Glutamate--tRNA ligase 1 (447 aa).

The 'HIGH' region signature appears at 10–20 (PSPTGMLHVGN). A 'KMSKS' region motif is present at residues 240 to 244 (KISKR). Lys-243 contacts ATP.

This sequence belongs to the class-I aminoacyl-tRNA synthetase family. Glutamate--tRNA ligase type 1 subfamily. Monomer.

The protein localises to the cytoplasm. The catalysed reaction is tRNA(Glu) + L-glutamate + ATP = L-glutamyl-tRNA(Glu) + AMP + diphosphate. Functionally, catalyzes the attachment of glutamate to tRNA(Glu) in a two-step reaction: glutamate is first activated by ATP to form Glu-AMP and then transferred to the acceptor end of tRNA(Glu). The polypeptide is Glutamate--tRNA ligase 1 (Rickettsia massiliae (strain Mtu5)).